The following is a 422-amino-acid chain: Proton-gated ion channel subunit pbo-6 (422 aa).

An N-terminal signal peptide occupies residues 1–20; that stretch reads MQCSFLTIFIFITTVTVGVA. Topologically, residues 21 to 233 are extracellular; sequence EFSEQYQGSS…IKVARKPFYY (213 aa). Cys151 and Cys165 are disulfide-bonded. 3 helical membrane-spanning segments follow: residues 234–254, 268–288, and 294–314; these read LISL…GLFA, LGVT…EKVP, and VPLL…ATIL. The Cytoplasmic segment spans residues 315–378; the sequence is TSTVMRVHAK…GEVSRRMDYL (64 aa). A helical membrane pass occupies residues 379–399; the sequence is LASVFIIIISTPTLYLFYMCF.

It belongs to the ligand-gated ion channel (TC 1.A.9) family. Acetylcholine receptor (TC 1.A.9.1) subfamily. As to quaternary structure, the functional channel is a hetero-oligomer of pbo-5 and pbo-6. In terms of tissue distribution, expressed in the posterior body muscles.

The protein localises to the membrane. In terms of biological role, forms a proton-gated ion channel with pbo-5 that is activated by acidification of the posterior coelomic space, leading to posterior body wall muscle contraction (pBoc) during the defecation cycle. Not necessary for stimulation of posterior body contraction (pBoc). Does not bind neurotransmitters such as acetylcholine, gamma-aminobutyric acid, glycine, serotonin, glutamate or choline. The sequence is that of Proton-gated ion channel subunit pbo-6 from Caenorhabditis elegans.